The following is a 127-amino-acid chain: Large ribosomal subunit protein uL18 (127 aa).

Residues 1–26 (MASTLTVRKSLSDRAKARARRQARGR) form a disordered region. Over residues 17–26 (ARARRQARGR) the composition is skewed to basic residues.

The protein belongs to the universal ribosomal protein uL18 family. Part of the 50S ribosomal subunit; part of the 5S rRNA/L5/L18/L25 subcomplex. Contacts the 5S and 23S rRNAs.

This is one of the proteins that bind and probably mediate the attachment of the 5S RNA into the large ribosomal subunit, where it forms part of the central protuberance. This chain is Large ribosomal subunit protein uL18, found in Cutibacterium acnes (strain DSM 16379 / KPA171202) (Propionibacterium acnes).